Here is a 179-residue protein sequence, read N- to C-terminus: MHLYTQTLNTVTGLLANEGSFGLNLDIFEANLINIVILGGGIFKLGSTALSESLAERQQKIVGAIQESEERLEQAVTKLTESEKQLAQAQLVITSLKEEAEATAKQVKSGILTDGKAEIERLTASAKGQIGTIEKKIRKEISEYVVTLALQRVTLQLEGKLDVNLQQQIIDKNISKLEG.

A helical membrane pass occupies residues 35 to 51; it reads IVILGGGIFKLGSTALS.

This sequence belongs to the ATPase B chain family. In terms of assembly, F-type ATPases have 2 components, F(1) - the catalytic core - and F(0) - the membrane proton channel. F(1) has five subunits: alpha(3), beta(3), gamma(1), delta(1), epsilon(1). F(0) has four main subunits: a(1), b(1), b'(1) and c(10-14). The alpha and beta chains form an alternating ring which encloses part of the gamma chain. F(1) is attached to F(0) by a central stalk formed by the gamma and epsilon chains, while a peripheral stalk is formed by the delta, b and b' chains.

It localises to the plastid. The protein resides in the chloroplast thylakoid membrane. F(1)F(0) ATP synthase produces ATP from ADP in the presence of a proton or sodium gradient. F-type ATPases consist of two structural domains, F(1) containing the extramembraneous catalytic core and F(0) containing the membrane proton channel, linked together by a central stalk and a peripheral stalk. During catalysis, ATP synthesis in the catalytic domain of F(1) is coupled via a rotary mechanism of the central stalk subunits to proton translocation. Functionally, component of the F(0) channel, it forms part of the peripheral stalk, linking F(1) to F(0). In Emiliania huxleyi (Coccolithophore), this protein is ATP synthase subunit b, chloroplastic.